The primary structure comprises 507 residues: Glycerol kinase (507 aa).

Residue T14 coordinates ADP. ATP is bound by residues T14, T15, and S16. T14 provides a ligand contact to sn-glycerol 3-phosphate. R18 serves as a coordination point for ADP. Sn-glycerol 3-phosphate contacts are provided by R84, E85, Y137, and D247. Glycerol contacts are provided by R84, E85, Y137, D247, and Q248. The ADP site is built by T269 and G312. ATP-binding residues include T269, G312, Q316, and G413. Positions 413 and 417 each coordinate ADP.

Belongs to the FGGY kinase family.

The catalysed reaction is glycerol + ATP = sn-glycerol 3-phosphate + ADP + H(+). Its pathway is polyol metabolism; glycerol degradation via glycerol kinase pathway; sn-glycerol 3-phosphate from glycerol: step 1/1. With respect to regulation, inhibited by fructose 1,6-bisphosphate (FBP). Functionally, key enzyme in the regulation of glycerol uptake and metabolism. Catalyzes the phosphorylation of glycerol to yield sn-glycerol 3-phosphate. The polypeptide is Glycerol kinase (Psychromonas ingrahamii (strain DSM 17664 / CCUG 51855 / 37)).